The following is a 191-amino-acid chain: Pyridoxal 5'-phosphate synthase subunit PdxT (191 aa).

52 to 54 contributes to the L-glutamine binding site; it reads GES. Catalysis depends on Cys81, which acts as the Nucleophile. L-glutamine contacts are provided by residues Arg108 and 136–137; that span reads IR. Active-site charge relay system residues include His172 and Glu174.

This sequence belongs to the glutaminase PdxT/SNO family. In terms of assembly, in the presence of PdxS, forms a dodecamer of heterodimers. Only shows activity in the heterodimer.

It carries out the reaction aldehydo-D-ribose 5-phosphate + D-glyceraldehyde 3-phosphate + L-glutamine = pyridoxal 5'-phosphate + L-glutamate + phosphate + 3 H2O + H(+). It catalyses the reaction L-glutamine + H2O = L-glutamate + NH4(+). It participates in cofactor biosynthesis; pyridoxal 5'-phosphate biosynthesis. Its function is as follows. Catalyzes the hydrolysis of glutamine to glutamate and ammonia as part of the biosynthesis of pyridoxal 5'-phosphate. The resulting ammonia molecule is channeled to the active site of PdxS. The chain is Pyridoxal 5'-phosphate synthase subunit PdxT from Actinobacillus pleuropneumoniae serotype 5b (strain L20).